We begin with the raw amino-acid sequence, 413 residues long: Peptidase T (413 aa).

Residue histidine 81 participates in Zn(2+) binding. The active site involves aspartate 83. Aspartate 143 serves as a coordination point for Zn(2+). Glutamate 178 serves as the catalytic Proton acceptor. Residues glutamate 179, aspartate 201, and histidine 383 each contribute to the Zn(2+) site.

It belongs to the peptidase M20B family. It depends on Zn(2+) as a cofactor.

It localises to the cytoplasm. The catalysed reaction is Release of the N-terminal residue from a tripeptide.. In terms of biological role, cleaves the N-terminal amino acid of tripeptides. The sequence is that of Peptidase T from Lactococcus lactis subsp. cremoris (Streptococcus cremoris).